The sequence spans 96 residues: (4S)-4-hydroxy-5-phosphonooxypentane-2,3-dione isomerase (96 aa).

The ABM domain occupies 2 to 91 (HVTLVEINVH…MTGPRKKRLF (90 aa)).

It belongs to the LsrG family. In terms of assembly, homodimer.

It is found in the cytoplasm. It catalyses the reaction (2S)-2-hydroxy-3,4-dioxopentyl phosphate = 3-hydroxy-2,4-dioxopentyl phosphate. In terms of biological role, involved in the degradation of phospho-AI-2, thereby terminating induction of the lsr operon and closing the AI-2 signaling cycle. Catalyzes the conversion of (4S)-4-hydroxy-5-phosphonooxypentane-2,3-dione (P-DPD) to 3-hydroxy-5-phosphonooxypentane-2,4-dione (P-HPD). This is (4S)-4-hydroxy-5-phosphonooxypentane-2,3-dione isomerase from Escherichia coli O157:H7.